We begin with the raw amino-acid sequence, 289 residues long: Acetyl-coenzyme A carboxylase carboxyl transferase subunit beta (289 aa).

Positions 24 to 289 constitute a CoA carboxyltransferase N-terminal domain; it reads LWTNCESCGQ…RQKTVSDAAA (266 aa). Residues C28, C31, C47, and C50 each coordinate Zn(2+). The C4-type zinc-finger motif lies at 28–50; sequence CESCGQMMLTKELERSEKVCPHC.

It belongs to the AccD/PCCB family. As to quaternary structure, acetyl-CoA carboxylase is a heterohexamer composed of biotin carboxyl carrier protein (AccB), biotin carboxylase (AccC) and two subunits each of ACCase subunit alpha (AccA) and ACCase subunit beta (AccD). Zn(2+) serves as cofactor.

It localises to the cytoplasm. It catalyses the reaction N(6)-carboxybiotinyl-L-lysyl-[protein] + acetyl-CoA = N(6)-biotinyl-L-lysyl-[protein] + malonyl-CoA. Its pathway is lipid metabolism; malonyl-CoA biosynthesis; malonyl-CoA from acetyl-CoA: step 1/1. Functionally, component of the acetyl coenzyme A carboxylase (ACC) complex. Biotin carboxylase (BC) catalyzes the carboxylation of biotin on its carrier protein (BCCP) and then the CO(2) group is transferred by the transcarboxylase to acetyl-CoA to form malonyl-CoA. The chain is Acetyl-coenzyme A carboxylase carboxyl transferase subunit beta from Gluconobacter oxydans (strain 621H) (Gluconobacter suboxydans).